Consider the following 360-residue polypeptide: Serine/threonine-protein kinase SRK2H (360 aa).

The Protein kinase domain occupies 4 to 260; sequence YEVVKDLGAG…LKEIKKHPWY (257 aa). ATP is bound by residues 10-18 and Lys33; that span reads LGAGNFGVA. Residue Asp123 is the Proton acceptor of the active site. Residues 298-360 form a disordered region; it reads EARNPAPSSN…AHSCQEPPKA (63 aa). The span at 313 to 343 shows a compositional bias: acidic residues; the sequence is DDDEEDVEDEVEEEEEEEEEEEEEEEEEEDE. Positions 344–360 are enriched in basic and acidic residues; the sequence is YEKHVKEAHSCQEPPKA.

It belongs to the protein kinase superfamily. Ser/Thr protein kinase family. In terms of tissue distribution, expressed in seedlings.

The catalysed reaction is L-seryl-[protein] + ATP = O-phospho-L-seryl-[protein] + ADP + H(+). It catalyses the reaction L-threonyl-[protein] + ATP = O-phospho-L-threonyl-[protein] + ADP + H(+). This chain is Serine/threonine-protein kinase SRK2H (SRK2H), found in Arabidopsis thaliana (Mouse-ear cress).